Reading from the N-terminus, the 339-residue chain is Serine racemase (339 aa).

Positions 43 and 63 each coordinate ATP. Lys-68 acts as the Proton acceptor in catalysis. An N6-(pyridoxal phosphate)lysine modification is found at Lys-68. Thr-90 serves as a coordination point for Ca(2+). The Proton acceptor role is filled by Ser-93. Asn-95 is a binding site for pyridoxal 5'-phosphate. At Cys-122 the chain carries S-nitrosocysteine. Tyr-130 is a binding site for ATP. Asp-187 serves as a coordination point for Mg(2+). 3 residues coordinate pyridoxal 5'-phosphate: Gly-195, Gly-196, and Gly-197. Ca(2+) contacts are provided by Glu-219, Ala-223, and Asp-225. Residues Glu-219, Ala-223, and Asp-225 each coordinate Mg(2+). Residues Glu-219, Ala-223, and Asp-225 each coordinate Mn(2+). Lys-287 contributes to the ATP binding site. Ser-323 contacts pyridoxal 5'-phosphate. Asn-326 lines the ATP pocket.

Belongs to the serine/threonine dehydratase family. Mg(2+) is required as a cofactor. Requires Mn(2+) as cofactor. The cofactor is Ca(2+). It depends on pyridoxal 5'-phosphate as a cofactor.

The enzyme catalyses L-serine = D-serine. It carries out the reaction L-serine = pyruvate + NH4(+). It catalyses the reaction D-serine = pyruvate + NH4(+). Functionally, catalyzes the synthesis of D-serine from L-serine. Has dehydratase activity towards both L-serine and D-serine. The sequence is that of Serine racemase from Oryza sativa subsp. indica (Rice).